The primary structure comprises 405 residues: MTLADKPVLSHAVKKLLTNQYIDYVRVIINRNHEDFYRETIDSLHNYYLSEAVHSFQYVTLKSRKKEEWIPVSSTGMKGRVDTKLLSPVYGGKSRQNSVKLGLESLQKINPDFVVIHDACRPFVSNTLINNLARSMINNQHTGVVPAIEVEDTISLVNDDLIESTIPRERLRAIQTPQIFNFKELLSYHRSNKEFTDDSSLMVEHKKRVVVTRGEKINFKLTTKEDINMAKLLLDEPKYRVGTGYDIHRFIKAQGKAKSFIKICGVEIEYDMKIEAHSDGDVAIHAVVDAILGALGCGDIGAHFPPSFPEWKDRNSSHFLDFAAKKAKEKGYSVSNLDITIVCEEPKISPYKVAMKKFISKTLEIDSEFVNVKATTTEKLGSIGRNEGILAHASVLLYKIAPLHN.

The interval 1–240 (MTLADKPVLS…KLLLDEPKYR (240 aa)) is 2-C-methyl-D-erythritol 4-phosphate cytidylyltransferase. Residues 240–405 (RVGTGYDIHR…LLYKIAPLHN (166 aa)) are 2-C-methyl-D-erythritol 2,4-cyclodiphosphate synthase. Positions 246 and 248 each coordinate a divalent metal cation. Residues 246–248 (DIH) and 277–278 (HS) each bind 4-CDP-2-C-methyl-D-erythritol 2-phosphate. His285 contacts a divalent metal cation. Residues 299 to 301 (DIG), 375 to 378 (TTTE), and Arg385 contribute to the 4-CDP-2-C-methyl-D-erythritol 2-phosphate site.

This sequence in the N-terminal section; belongs to the IspD/TarI cytidylyltransferase family. IspD subfamily. In the C-terminal section; belongs to the IspF family. A divalent metal cation is required as a cofactor.

The catalysed reaction is 2-C-methyl-D-erythritol 4-phosphate + CTP + H(+) = 4-CDP-2-C-methyl-D-erythritol + diphosphate. The enzyme catalyses 4-CDP-2-C-methyl-D-erythritol 2-phosphate = 2-C-methyl-D-erythritol 2,4-cyclic diphosphate + CMP. It functions in the pathway isoprenoid biosynthesis; isopentenyl diphosphate biosynthesis via DXP pathway; isopentenyl diphosphate from 1-deoxy-D-xylulose 5-phosphate: step 2/6. Its pathway is isoprenoid biosynthesis; isopentenyl diphosphate biosynthesis via DXP pathway; isopentenyl diphosphate from 1-deoxy-D-xylulose 5-phosphate: step 4/6. Functionally, bifunctional enzyme that catalyzes the formation of 4-diphosphocytidyl-2-C-methyl-D-erythritol from CTP and 2-C-methyl-D-erythritol 4-phosphate (MEP) (IspD), and catalyzes the conversion of 4-diphosphocytidyl-2-C-methyl-D-erythritol 2-phosphate (CDP-ME2P) to 2-C-methyl-D-erythritol 2,4-cyclodiphosphate (ME-CPP) with a corresponding release of cytidine 5-monophosphate (CMP) (IspF). In Wolbachia sp. subsp. Brugia malayi (strain TRS), this protein is Bifunctional enzyme IspD/IspF.